The sequence spans 241 residues: Probable transcriptional regulatory protein Rmet_0785 (241 aa).

It belongs to the TACO1 family.

It is found in the cytoplasm. This is Probable transcriptional regulatory protein Rmet_0785 from Cupriavidus metallidurans (strain ATCC 43123 / DSM 2839 / NBRC 102507 / CH34) (Ralstonia metallidurans).